Reading from the N-terminus, the 1070-residue chain is Carbamoyl phosphate synthase large chain (1070 aa).

Residues 1-401 are carboxyphosphate synthetic domain; that stretch reads MPKRDDIKTI…ALLKAVRSLE (401 aa). Arginine 129, arginine 169, glycine 175, glycine 176, lysine 208, isoleucine 210, glutamate 215, glycine 241, isoleucine 242, histidine 243, glutamine 284, and glutamate 298 together coordinate ATP. Residues 133–327 enclose the ATP-grasp 1 domain; that stretch reads RDLMNELGEP…IAKLAAKIAV (195 aa). Mg(2+) is bound by residues glutamine 284, glutamate 298, and asparagine 300. 3 residues coordinate Mn(2+): glutamine 284, glutamate 298, and asparagine 300. Residues 402–546 form an oligomerization domain region; the sequence is VGADHLLLEE…YSTYEEENES (145 aa). A carbamoyl phosphate synthetic domain region spans residues 547 to 929; it reads TRSAKESVIV…ALYKGFVASG (383 aa). The ATP-grasp 2 domain maps to 671–861; sequence EKALEILQIP…MANVATRVIL (191 aa). ATP contacts are provided by arginine 707, arginine 746, valine 748, glutamate 752, glycine 777, valine 778, histidine 779, serine 780, glutamine 820, and glutamate 832. Mg(2+) is bound by residues glutamine 820, glutamate 832, and asparagine 834. Residues glutamine 820, glutamate 832, and asparagine 834 each coordinate Mn(2+). The MGS-like domain occupies 930–1070; sequence TTMHDYGTVL…SEVKQPKVRV (141 aa). The interval 930 to 1070 is allosteric domain; sequence TTMHDYGTVL…SEVKQPKVRV (141 aa).

It belongs to the CarB family. As to quaternary structure, composed of two chains; the small (or glutamine) chain promotes the hydrolysis of glutamine to ammonia, which is used by the large (or ammonia) chain to synthesize carbamoyl phosphate. Tetramer of heterodimers (alpha,beta)4. Requires Mg(2+) as cofactor. It depends on Mn(2+) as a cofactor.

The catalysed reaction is hydrogencarbonate + L-glutamine + 2 ATP + H2O = carbamoyl phosphate + L-glutamate + 2 ADP + phosphate + 2 H(+). It carries out the reaction hydrogencarbonate + NH4(+) + 2 ATP = carbamoyl phosphate + 2 ADP + phosphate + 2 H(+). Its pathway is amino-acid biosynthesis; L-arginine biosynthesis; carbamoyl phosphate from bicarbonate: step 1/1. It participates in pyrimidine metabolism; UMP biosynthesis via de novo pathway; (S)-dihydroorotate from bicarbonate: step 1/3. Its function is as follows. Large subunit of the glutamine-dependent carbamoyl phosphate synthetase (CPSase). CPSase catalyzes the formation of carbamoyl phosphate from the ammonia moiety of glutamine, carbonate, and phosphate donated by ATP, constituting the first step of 2 biosynthetic pathways, one leading to arginine and/or urea and the other to pyrimidine nucleotides. The large subunit (synthetase) binds the substrates ammonia (free or transferred from glutamine from the small subunit), hydrogencarbonate and ATP and carries out an ATP-coupled ligase reaction, activating hydrogencarbonate by forming carboxy phosphate which reacts with ammonia to form carbamoyl phosphate. The polypeptide is Carbamoyl phosphate synthase large chain (Listeria welshimeri serovar 6b (strain ATCC 35897 / DSM 20650 / CCUG 15529 / CIP 8149 / NCTC 11857 / SLCC 5334 / V8)).